A 282-amino-acid chain; its full sequence is Homeobox-leucine zipper protein HAT1 (282 aa).

Residues 71-134 (LEEETGVSSP…EEDYGGETCR (64 aa)) form a disordered region. Residues 76–89 (GVSSPNSTISSTVS) show a composition bias toward low complexity. Positions 132-191 (TCRKKLRLSKDQSAVLEDTFKEHNTLNPKQKLALAKKLGLTARQVEVWFQNRRARTKLKQ) form a DNA-binding region, homeobox. The leucine-zipper stretch occupies residues 199–220 (LKRCVEKLTEENRRLEKEAAEL).

Belongs to the HD-ZIP homeobox family. Class II subfamily. As to quaternary structure, interacts with BZIP30.

The protein resides in the nucleus. In terms of biological role, probable transcription factor. The protein is Homeobox-leucine zipper protein HAT1 (HAT1) of Arabidopsis thaliana (Mouse-ear cress).